The following is a 50-amino-acid chain: Photosystem II reaction center protein M (50 aa).

Residues 7–27 (GFVASLLFVGVPTIFLIGLFI) form a helical membrane-spanning segment.

It belongs to the PsbM family. In terms of assembly, PSII is composed of 1 copy each of membrane proteins PsbA, PsbB, PsbC, PsbD, PsbE, PsbF, PsbH, PsbI, PsbJ, PsbK, PsbL, PsbM, PsbT, PsbX, PsbY, Psb30/Ycf12, peripheral proteins PsbO, CyanoQ (PsbQ), PsbU, PsbV and a large number of cofactors. It forms dimeric complexes.

The protein resides in the cellular thylakoid membrane. Functionally, one of the components of the core complex of photosystem II (PSII). PSII is a light-driven water:plastoquinone oxidoreductase that uses light energy to abstract electrons from H(2)O, generating O(2) and a proton gradient subsequently used for ATP formation. It consists of a core antenna complex that captures photons, and an electron transfer chain that converts photonic excitation into a charge separation. This subunit is found at the monomer-monomer interface. The protein is Photosystem II reaction center protein M of Prochlorococcus marinus (strain MIT 9515).